The sequence spans 366 residues: Palmitoyltransferase ZDHHC2 (366 aa).

Over 1–15 the chain is Cytoplasmic; that stretch reads MAPSGPGGVRRRCRR. The helical transmembrane segment at 16 to 36 threads the bilayer; the sequence is VLYWIPVVFISLLLGWSYYAY. Residues 37–47 are Lumenal-facing; sequence AIQLCIVSMEN. A helical transmembrane segment spans residues 48–68; sequence IGEQVVCLMAYHLLFAMFVWS. Topologically, residues 69 to 169 are cytoplasmic; the sequence is YWKTIFTLPM…NNCVGFSNYK (101 aa). Residues 126 to 176 enclose the DHHC domain; that stretch reads RYCDRCRLIKPDRCHHCSVCDKCILKMDHHCPWVNNCVGFSNYKFFLLFLA. The S-palmitoyl cysteine intermediate role is filled by Cys-156. Residues 170–190 traverse the membrane as a helical segment; sequence FFLLFLAYSLLYCLFIAATDL. Over 191 to 207 the chain is Lumenal; it reads QYFIRFWTNGLPDTQAK. Residues 208–228 traverse the membrane as a helical segment; sequence FHIMFLFFAAAMFSVSLSSLF. The Cytoplasmic segment spans residues 229–366; it reads GYHCWLVSKN…NPALTMENET (138 aa). Composition is skewed to polar residues over residues 297 to 316 and 332 to 349; these read VNQD…TAKN and SHLL…SNSG. Residues 297 to 366 are disordered; it reads VNQDPEQPST…NPALTMENET (70 aa). The interval 298–366 is mediates localization to plasma membrane and recycling endosomes; it reads NQDPEQPSTP…NPALTMENET (69 aa). A Non-canonical dileucine endocytic signal motif is present at residues 334–335; that stretch reads LL. The short motif at 357–360 is the NPxY-like endocytic signal element; sequence NPAL.

Belongs to the DHHC palmitoyltransferase family. Monomer. Homodimer. The monomeric form has a higher catalytic activity. In terms of processing, autopalmitoylated.

It localises to the postsynaptic density. The protein localises to the postsynaptic recycling endosome membrane. The protein resides in the cell membrane. It is found in the endoplasmic reticulum membrane. Its subcellular location is the golgi apparatus membrane. It catalyses the reaction L-cysteinyl-[protein] + hexadecanoyl-CoA = S-hexadecanoyl-L-cysteinyl-[protein] + CoA. The catalysed reaction is L-cysteinyl-[protein] + tetradecanoyl-CoA = S-tetradecanoyl-L-cysteinyl-[protein] + CoA. It carries out the reaction L-cysteinyl-[protein] + octadecanoyl-CoA = S-octadecanoyl-L-cysteinyl-[protein] + CoA. Functionally, palmitoyltransferase that catalyzes the addition of palmitate onto various protein substrates and is involved in a variety of cellular processes. Has no stringent fatty acid selectivity and in addition to palmitate can also transfer onto target proteins myristate from tetradecanoyl-CoA and stearate from octadecanoyl-CoA. In the nervous system, plays a role in long term synaptic potentiation by palmitoylating AKAP5 through which it regulates protein trafficking from the dendritic recycling endosomes to the plasma membrane and controls both structural and functional plasticity at excitatory synapses. In dendrites, mediates the palmitoylation of DLG4 when synaptic activity decreases and induces synaptic clustering of DLG4 and associated AMPA-type glutamate receptors. Also mediates the de novo and turnover palmitoylation of RGS7BP, a shuttle for Gi/o-specific GTPase-activating proteins/GAPs, promoting its localization to the plasma membrane in response to the activation of G protein-coupled receptors. Through the localization of these GTPase-activating proteins/GAPs, it also probably plays a role in G protein-coupled receptors signaling in neurons. Also probably plays a role in cell adhesion by palmitoylating CD9 and CD151 to regulate their expression and function. Palmitoylates the endoplasmic reticulum protein CKAP4 and regulates its localization to the plasma membrane. Could also palmitoylate LCK and regulate its localization to the plasma membrane. The chain is Palmitoyltransferase ZDHHC2 from Rattus norvegicus (Rat).